The chain runs to 474 residues: Siroheme synthase (474 aa).

A precorrin-2 dehydrogenase /sirohydrochlorin ferrochelatase region spans residues 1-203 (MKLFPLFADL…QRPEEAERLL (203 aa)). NAD(+)-binding positions include 22–23 (EI) and 43–44 (PA). Ser128 carries the phosphoserine modification. Residues 216–474 (GSVVLVGAGP…QRPAPAALAA (259 aa)) are uroporphyrinogen-III C-methyltransferase. Position 225 (Pro225) interacts with S-adenosyl-L-methionine. Asp248 functions as the Proton acceptor in the catalytic mechanism. Lys270 functions as the Proton donor in the catalytic mechanism. S-adenosyl-L-methionine is bound by residues 302–304 (GGD), Ile307, 332–333 (TA), Met384, and Gly413.

It in the N-terminal section; belongs to the precorrin-2 dehydrogenase / sirohydrochlorin ferrochelatase family. This sequence in the C-terminal section; belongs to the precorrin methyltransferase family.

The catalysed reaction is uroporphyrinogen III + 2 S-adenosyl-L-methionine = precorrin-2 + 2 S-adenosyl-L-homocysteine + H(+). It catalyses the reaction precorrin-2 + NAD(+) = sirohydrochlorin + NADH + 2 H(+). It carries out the reaction siroheme + 2 H(+) = sirohydrochlorin + Fe(2+). The protein operates within cofactor biosynthesis; adenosylcobalamin biosynthesis; precorrin-2 from uroporphyrinogen III: step 1/1. It functions in the pathway cofactor biosynthesis; adenosylcobalamin biosynthesis; sirohydrochlorin from precorrin-2: step 1/1. It participates in porphyrin-containing compound metabolism; siroheme biosynthesis; precorrin-2 from uroporphyrinogen III: step 1/1. Its pathway is porphyrin-containing compound metabolism; siroheme biosynthesis; siroheme from sirohydrochlorin: step 1/1. The protein operates within porphyrin-containing compound metabolism; siroheme biosynthesis; sirohydrochlorin from precorrin-2: step 1/1. Multifunctional enzyme that catalyzes the SAM-dependent methylations of uroporphyrinogen III at position C-2 and C-7 to form precorrin-2 via precorrin-1. Then it catalyzes the NAD-dependent ring dehydrogenation of precorrin-2 to yield sirohydrochlorin. Finally, it catalyzes the ferrochelation of sirohydrochlorin to yield siroheme. In Bordetella petrii (strain ATCC BAA-461 / DSM 12804 / CCUG 43448), this protein is Siroheme synthase.